Reading from the N-terminus, the 308-residue chain is MRSKKMINEKLKMWWETARPKTLPLALASIFTGSALGYWANPQGFNGLVMVLCLLTTILLQVLSNFANDYGDHQKGSDTEERIGPLRGIQKGAISAKELKWGLILMVMASFLSGSFLIGIAYENLSDLFAFAGLGILAIVAAITYTVGVKPYGYMGLGDISVLVFFGLLGVGGTYYLQTHSIDSHIILPAIGSGLLASAVLNINNLRDIEQDAKAGKNTLAVRLGAYKGRVYHCILLSVAALCYLAFAVATAISWTNYLFVLAMPLLAKHAIFVYCSQQPSELRPILAQMSMISLLINILFSLGLLIG.

The next 9 membrane-spanning stretches (helical) occupy residues T22–P42, G47–A67, W101–A121, F129–V149, G153–G173, I186–L206, I235–W255, T256–C276, and I286–L306.

The protein belongs to the MenA family. Type 1 subfamily.

The protein localises to the cell inner membrane. The enzyme catalyses an all-trans-polyprenyl diphosphate + 1,4-dihydroxy-2-naphthoate + H(+) = a 2-demethylmenaquinol + CO2 + diphosphate. It participates in quinol/quinone metabolism; menaquinone biosynthesis; menaquinol from 1,4-dihydroxy-2-naphthoate: step 1/2. In terms of biological role, conversion of 1,4-dihydroxy-2-naphthoate (DHNA) to demethylmenaquinone (DMK). The protein is 1,4-dihydroxy-2-naphthoate octaprenyltransferase of Haemophilus influenzae (strain ATCC 51907 / DSM 11121 / KW20 / Rd).